A 385-amino-acid polypeptide reads, in one-letter code: Enoyl-[acyl-carrier-protein] reductase, mitochondrial (385 aa).

Tyr-78 functions as the Proton donor in the catalytic mechanism. NADP(+)-binding positions include Asn-162, 190-193, 213-215, 288-291, 313-315, and Lys-378; these read TSGV, RDR, YGGM, and YWV.

The protein belongs to the zinc-containing alcohol dehydrogenase family. Quinone oxidoreductase subfamily. Homodimer.

The protein localises to the mitochondrion matrix. It carries out the reaction a 2,3-saturated acyl-[ACP] + NADP(+) = a (2E)-enoyl-[ACP] + NADPH + H(+). Catalyzes the NADPH-dependent reduction of trans-2-enoyl thioesters in mitochondrial fatty acid synthesis (fatty acid synthesis type II). Fatty acid chain elongation in mitochondria uses acyl carrier protein (ACP) as an acyl group carrier, but the enzyme accepts both ACP and CoA thioesters as substrates in vitro. Required for respiration and the maintenance of the mitochondrial compartment. The chain is Enoyl-[acyl-carrier-protein] reductase, mitochondrial (ETR1) from Candida glabrata (strain ATCC 2001 / BCRC 20586 / JCM 3761 / NBRC 0622 / NRRL Y-65 / CBS 138) (Yeast).